Here is a 394-residue protein sequence, read N- to C-terminus: S-adenosylmethionine synthase 1 (394 aa).

Glu-11 serves as a coordination point for Mg(2+). His-17 is a binding site for ATP. Glu-45 is a K(+) binding site. Glu-58 and Gln-101 together coordinate L-methionine. ATP is bound by residues 169 to 171 (DGK), 237 to 240 (SGRF), Asp-248, 254 to 255 (RK), Ala-271, Lys-275, and Lys-279. Asp-248 provides a ligand contact to L-methionine. An L-methionine-binding site is contributed by Lys-279.

Belongs to the AdoMet synthase family. As to quaternary structure, homotetramer. It depends on Mn(2+) as a cofactor. The cofactor is Mg(2+). Requires Co(2+) as cofactor. K(+) serves as cofactor.

It localises to the cytoplasm. The catalysed reaction is L-methionine + ATP + H2O = S-adenosyl-L-methionine + phosphate + diphosphate. It participates in amino-acid biosynthesis; S-adenosyl-L-methionine biosynthesis; S-adenosyl-L-methionine from L-methionine: step 1/1. Catalyzes the formation of S-adenosylmethionine from methionine and ATP. The reaction comprises two steps that are both catalyzed by the same enzyme: formation of S-adenosylmethionine (AdoMet) and triphosphate, and subsequent hydrolysis of the triphosphate. The chain is S-adenosylmethionine synthase 1 (SAMS1) from Triticum monococcum (Einkorn wheat).